The chain runs to 460 residues: Chromosomal replication initiator protein DnaA (460 aa).

The domain I, interacts with DnaA modulators stretch occupies residues 1-78 (MENFWQACSA…VPVEVQFVLD (78 aa)). A domain II region spans residues 78–123 (DPRLVAARRPAAQASVVSDRADDVPSNVLEPIPSNATDHTPRRDQS). The tract at residues 124-340 (RINTALTFDS…GALRKILAYS (217 aa)) is domain III, AAA+ region. ATP is bound by residues Gly168, Gly170, Lys171, and Thr172. Residues 341-460 (RFHGKDITIE…LHVLEQTLKG (120 aa)) form a domain IV, binds dsDNA region.

It belongs to the DnaA family. As to quaternary structure, oligomerizes as a right-handed, spiral filament on DNA at oriC.

The protein localises to the cytoplasm. Plays an essential role in the initiation and regulation of chromosomal replication. ATP-DnaA binds to the origin of replication (oriC) to initiate formation of the DNA replication initiation complex once per cell cycle. Binds the DnaA box (a 9 base pair repeat at the origin) and separates the double-stranded (ds)DNA. Forms a right-handed helical filament on oriC DNA; dsDNA binds to the exterior of the filament while single-stranded (ss)DNA is stabiized in the filament's interior. The ATP-DnaA-oriC complex binds and stabilizes one strand of the AT-rich DNA unwinding element (DUE), permitting loading of DNA polymerase. After initiation quickly degrades to an ADP-DnaA complex that is not apt for DNA replication. Binds acidic phospholipids. The chain is Chromosomal replication initiator protein DnaA from Herminiimonas arsenicoxydans.